The following is a 265-amino-acid chain: Hydroxyethylthiazole kinase (265 aa).

Residue Met36 participates in substrate binding. Residues Lys112 and Ser160 each contribute to the ATP site. Gly187 is a substrate binding site.

This sequence belongs to the Thz kinase family. Mg(2+) is required as a cofactor.

The catalysed reaction is 5-(2-hydroxyethyl)-4-methylthiazole + ATP = 4-methyl-5-(2-phosphooxyethyl)-thiazole + ADP + H(+). The protein operates within cofactor biosynthesis; thiamine diphosphate biosynthesis; 4-methyl-5-(2-phosphoethyl)-thiazole from 5-(2-hydroxyethyl)-4-methylthiazole: step 1/1. In terms of biological role, catalyzes the phosphorylation of the hydroxyl group of 4-methyl-5-beta-hydroxyethylthiazole (THZ). The polypeptide is Hydroxyethylthiazole kinase (Clostridium perfringens (strain SM101 / Type A)).